The primary structure comprises 413 residues: Divalent metal cation transporter MntH (413 aa).

11 helical membrane passes run 19-39, 46-66, 94-114, 122-142, 156-176, 196-216, 241-261, 290-310, 329-349, 350-370, and 389-409; these read LALM…GNFA, ASFG…AMLI, VWFY…AEFI, LVLG…TFLI, VIGG…IFSQ, AVFL…IYLH, IAMT…AAAF, IFGL…TLAG, AITM…TRIL, VMSQ…LLIF, and IGWA…VGSL.

The protein belongs to the NRAMP family.

The protein localises to the cell inner membrane. Its function is as follows. H(+)-stimulated, divalent metal cation uptake system. This Klebsiella pneumoniae subsp. pneumoniae (strain ATCC 700721 / MGH 78578) protein is Divalent metal cation transporter MntH.